The following is a 570-amino-acid chain: Phosphoribosylaminoimidazole carboxylase (570 aa).

One can recognise an ATP-grasp domain in the interval 110–297 (KQHLVKNRIP…QFEAHLRAIL (188 aa)). 137-192 (GSSLGYPFVLKSRTLAYDGRGNFVVKSEEDIEKGLEFLANRPLYAEKWASFKKELS) is an ATP binding site.

The protein in the C-terminal section; belongs to the AIR carboxylase family. Class I subfamily.

The catalysed reaction is 5-amino-1-(5-phospho-D-ribosyl)imidazole-4-carboxylate + H(+) = 5-amino-1-(5-phospho-beta-D-ribosyl)imidazole + CO2. Its pathway is purine metabolism; IMP biosynthesis via de novo pathway; 5-amino-1-(5-phospho-D-ribosyl)imidazole-4-carboxylate from 5-amino-1-(5-phospho-D-ribosyl)imidazole (carboxylase route): step 1/1. The polypeptide is Phosphoribosylaminoimidazole carboxylase (ADE2) (Candida glabrata (strain ATCC 2001 / BCRC 20586 / JCM 3761 / NBRC 0622 / NRRL Y-65 / CBS 138) (Yeast)).